The primary structure comprises 287 residues: Probable endonuclease 4 (287 aa).

Residues H69, H109, E144, D178, H181, H215, D228, H230, and E260 each contribute to the Zn(2+) site.

This sequence belongs to the AP endonuclease 2 family. The cofactor is Zn(2+).

It carries out the reaction Endonucleolytic cleavage to 5'-phosphooligonucleotide end-products.. Functionally, endonuclease IV plays a role in DNA repair. It cleaves phosphodiester bonds at apurinic or apyrimidinic (AP) sites, generating a 3'-hydroxyl group and a 5'-terminal sugar phosphate. This is Probable endonuclease 4 from Thermotoga neapolitana (strain ATCC 49049 / DSM 4359 / NBRC 107923 / NS-E).